The primary structure comprises 547 residues: Sodium-coupled neutral amino acid transporter 4 (547 aa).

Residues 1–26 (MDPMELRNVNIEPDDESSSGESVPDS) are disordered. Over 1 to 104 (MDPMELRNVN…GLSYAMANTG (104 aa)) the chain is Extracellular. Ser49 carries the phosphoserine modification. Residues 105–125 (IILFIIMLLAVAILSLYSVHL) form a helical membrane-spanning segment. Residues 126–151 (LLKTAKEGGSLIYEKLGEKAFGWPGK) lie on the Cytoplasmic side of the membrane. The helical transmembrane segment at 152–172 (IGAFISITMQNIGAMSSYLFI) threads the bilayer. Topologically, residues 173–195 (IKYELPEVIRAFMGLEENTGEWY) are extracellular. The chain crosses the membrane as a helical span at residues 196–216 (PNGNYLIVFVSLGIILPLSLL). Residues 217–220 (KNLG) lie on the Cytoplasmic side of the membrane. A helical membrane pass occupies residues 221–241 (YLGYTSGFSLTCMVFFVSVVI). The Extracellular portion of the chain corresponds to 242 to 332 (YKKFQIPCPL…PKYFVFNSRT (91 aa)). The cysteines at positions 249 and 321 are disulfide-linked. 3 N-linked (GlcNAc...) asparagine glycosylation sites follow: Asn260, Asn264, and Asn276. Residues 333-353 (AYAIPILAFAFVCHPEVLPIY) form a helical membrane-spanning segment. Residues 354–369 (SELKDRSRRKMQTVSN) are Cytoplasmic-facing. The chain crosses the membrane as a helical span at residues 370 to 390 (ISITGMLVMYLLAALFGYLTF). Residues 391–411 (YGEVEDELLHAYSKVYTFDIP) are Extracellular-facing. A helical membrane pass occupies residues 412 to 432 (LLMVRLAVLVAVTLTVPIVLF). Over 433 to 453 (PIRTSVTTLLFPKRPFSWIRH) the chain is Cytoplasmic. Residues 454–474 (FLIAAVLIALNNVLVILVPTI) traverse the membrane as a helical segment. At 475–476 (KY) the chain is on the extracellular side. The chain crosses the membrane as a helical span at residues 477-497 (IFGFIGASSATMLIFILPAVF). At 498–514 (YLKLVKKESFRSPQKVG) the chain is on the cytoplasmic side. A helical transmembrane segment spans residues 515 to 535 (ALIFLVVGIIFMIGSMALIII). Residues 536 to 547 (DWIYDPPNSKHH) lie on the Extracellular side of the membrane.

It belongs to the amino acid/polyamine transporter 2 family. Post-translationally, the disulfide bond plays an important role in substrate transport, but has no effect on trafficking to the cell surface.

Its subcellular location is the cell membrane. The protein localises to the cell projection. It is found in the microvillus membrane. It catalyses the reaction L-methionine(in) + Na(+)(in) = L-methionine(out) + Na(+)(out). It carries out the reaction L-asparagine(in) + Na(+)(in) = L-asparagine(out) + Na(+)(out). The catalysed reaction is L-threonine(in) + Na(+)(in) = L-threonine(out) + Na(+)(out). The enzyme catalyses L-serine(in) + Na(+)(in) = L-serine(out) + Na(+)(out). It catalyses the reaction glycine(in) + Na(+)(in) = glycine(out) + Na(+)(out). It carries out the reaction L-alanine(in) + Na(+)(in) = L-alanine(out) + Na(+)(out). The catalysed reaction is L-glutamine(in) + Na(+)(in) = L-glutamine(out) + Na(+)(out). The enzyme catalyses L-histidine(in) + Na(+)(in) = L-histidine(out) + Na(+)(out). It catalyses the reaction L-cysteine(in) + Na(+)(in) = L-cysteine(out) + Na(+)(out). It carries out the reaction L-proline(in) + Na(+)(in) = L-proline(out) + Na(+)(out). Functionally, symporter that cotransports neutral amino acids and sodium ions from the extraccellular to the intracellular side of the cell membrane. The transport is electrogenic, pH dependent and partially tolerates substitution of Na(+) by Li(+). Preferentially transports smaller amino acids, such as glycine, L-alanine, L-serine, L-asparagine and L-threonine, followed by L-cysteine, L-histidine, L-proline and L-glutamine and L-methionine. The polypeptide is Sodium-coupled neutral amino acid transporter 4 (Pongo abelii (Sumatran orangutan)).